The chain runs to 794 residues: Glutamine--tRNA ligase (794 aa).

Residues 192 to 217 are disordered; the sequence is DNEKPKKKKEKPAKVEDKAAPVATSE. Positions 277 to 287 match the 'HIGH' region motif; it reads PEPNGYLHIGH. Residues 278 to 280 and 284 to 290 contribute to the ATP site; these read EPN and HIGHAKA. Aspartate 310 and tyrosine 450 together coordinate L-glutamine. Residues threonine 469, 498–499, and 506–508 each bind ATP; these read RL and MSK. The short motif at 505–509 is the 'KMSKS' region element; that stretch reads VMSKR.

It belongs to the class-I aminoacyl-tRNA synthetase family.

It catalyses the reaction tRNA(Gln) + L-glutamine + ATP = L-glutaminyl-tRNA(Gln) + AMP + diphosphate. The chain is Glutamine--tRNA ligase from Lupinus luteus (European yellow lupine).